Consider the following 99-residue polypeptide: Pterin-4-alpha-carbinolamine dehydratase (99 aa).

It belongs to the pterin-4-alpha-carbinolamine dehydratase family.

It catalyses the reaction (4aS,6R)-4a-hydroxy-L-erythro-5,6,7,8-tetrahydrobiopterin = (6R)-L-erythro-6,7-dihydrobiopterin + H2O. Functionally, involved in tetrahydrobiopterin biosynthesis. The sequence is that of Pterin-4-alpha-carbinolamine dehydratase (pcbd) from Dictyostelium discoideum (Social amoeba).